Here is a 782-residue protein sequence, read N- to C-terminus: Calcium-independent phospholipase A2-gamma (782 aa).

N-linked (GlcNAc...) asparagine glycosylation is present at N4. Disordered stretches follow at residues 219–275 (EKMS…PSAI) and 317–343 (SKSQ…AEEK). Positions 220-248 (KMSQQKENEHFRDKSELEDKKVEEGKLRS) are enriched in basic and acidic residues. The N-linked (GlcNAc...) asparagine glycan is linked to N361. The region spanning 445–640 (LSIDGGGTRG…LLNNPSALAM (196 aa)) is the PNPLA domain. A GXGXXG motif is present at residues 449 to 454 (GGGTRG). The chain crosses the membrane as a helical span at residues 475–495 (LFDYICGVSTGAILAFMLGLF). The GXSXG motif lies at 481-485 (GVSTG). S483 (nucleophile) is an active-site residue. D627 acts as the Proton acceptor in catalysis. The short motif at 627–629 (DGG) is the DGA/G element. An N6-succinyllysine modification is found at K736.

As to expression, expressed in parenchymal tissues including heart, skeletal muscle, placenta, brain, liver and pancreas. Also expressed in bronchial epithelial cells and kidney. Highest expression is observed in skeletal muscle and heart.

It is found in the endoplasmic reticulum membrane. The protein localises to the mitochondrion membrane. The protein resides in the peroxisome membrane. The enzyme catalyses a 1,2-diacyl-sn-glycero-3-phosphocholine + H2O = a 1-acyl-sn-glycero-3-phosphocholine + a fatty acid + H(+). It catalyses the reaction a 1,2-diacyl-sn-glycero-3-phosphocholine + H2O = a 2-acyl-sn-glycero-3-phosphocholine + a fatty acid + H(+). The catalysed reaction is a 1,2-diacyl-sn-glycero-3-phosphoethanolamine + H2O = a 1-acyl-sn-glycero-3-phosphoethanolamine + a fatty acid + H(+). It carries out the reaction a 1-O-(1Z-alkenyl)-2-acyl-sn-glycero-3-phosphocholine + H2O = a 1-O-(1Z-alkenyl)-sn-glycero-3-phosphocholine + a fatty acid + H(+). The enzyme catalyses a 1-acyl-sn-glycero-3-phosphocholine + H2O = sn-glycerol 3-phosphocholine + a fatty acid + H(+). It catalyses the reaction 1-acyl-2-(9Z,12Z)-octadecadienoyl-sn-glycero-3-phosphocholine + H2O = a 1-acyl-sn-glycero-3-phosphocholine + (9Z,12Z)-octadecadienoate + H(+). The catalysed reaction is 1-acyl-2-(5Z,8Z,11Z,14Z-eicosatetraenoyl)-sn-glycero-3-phosphocholine + H2O = a 1-acyl-sn-glycero-3-phosphocholine + (5Z,8Z,11Z,14Z)-eicosatetraenoate + H(+). It carries out the reaction 1-hexadecanoyl-2-(5Z,8Z,11Z,14Z-eicosatetraenoyl)-sn-glycero-3-phosphocholine + H2O = 1-hexadecanoyl-sn-glycero-3-phosphocholine + (5Z,8Z,11Z,14Z)-eicosatetraenoate + H(+). The enzyme catalyses 1-octadecanoyl-2-(9Z-octadecenoyl)-sn-glycero-3-phosphocholine + H2O = 1-octadecanoyl-sn-glycero-3-phosphocholine + (9Z)-octadecenoate + H(+). It catalyses the reaction 1-hexadecanoyl-2-(9Z-octadecenoyl)-sn-glycero-3-phosphocholine + H2O = 1-hexadecanoyl-sn-glycero-3-phosphocholine + (9Z)-octadecenoate + H(+). The catalysed reaction is 1-hexadecanoyl-2-(9Z,12Z-octadecadienoyl)-sn-glycero-3-phosphocholine + H2O = (9Z,12Z)-octadecadienoate + 1-hexadecanoyl-sn-glycero-3-phosphocholine + H(+). It carries out the reaction 1-acyl-2-(9Z,12Z)-octadecadienoyl-sn-glycero-3-phosphoethanolamine + H2O = a 1-acyl-sn-glycero-3-phosphoethanolamine + (9Z,12Z)-octadecadienoate + H(+). The enzyme catalyses 1-acyl-2-(5Z,8Z,11Z,14Z)-eicosatetraenoyl-sn-glycero-3-phosphoethanolamine + H2O = a 1-acyl-sn-glycero-3-phosphoethanolamine + (5Z,8Z,11Z,14Z)-eicosatetraenoate + H(+). It catalyses the reaction 1-hexadecanoyl-2-(5Z,8Z,11Z,14Z-eicosatetraenoyl)-sn-glycero-3-phosphoethanolamine + H2O = 1-hexadecanoyl-sn-glycero-3-phosphoethanolamine + (5Z,8Z,11Z,14Z)-eicosatetraenoate + H(+). The catalysed reaction is 1-hexadecanoyl-2-(5Z,8Z,11Z,14Z-eicosatetraenoyl)-sn-glycero-3-phosphocholine + H2O = 2-(5Z,8Z,11Z,14Z)-eicosatetraenoyl-sn-glycero-3-phosphocholine + hexadecanoate + H(+). It carries out the reaction 1-octadecanoyl-2-(9Z-octadecenoyl)-sn-glycero-3-phosphocholine + H2O = 2-(9Z-octadecenoyl)-sn-glycero-3-phosphocholine + octadecanoate + H(+). The enzyme catalyses 1-hexadecanoyl-2-(4Z,7Z,10Z,13Z,16Z,19Z-docosahexaenoyl)-sn-glycero-3-phosphocholine + H2O = 2-(4Z,7Z,10Z,13Z,16Z,19Z-docosahexaenoyl)-sn-glycero-3-phosphocholine + hexadecanoate + H(+). It catalyses the reaction 1-O-(1Z)-hexadecenyl-2 (5Z,8Z,11Z,14Z)-eicosatetraenoyl-sn-glycero-3-phosphocholine + H2O = 1-(1Z-hexadecenyl)-sn-glycero-3-phosphocholine + (5Z,8Z,11Z,14Z)-eicosatetraenoate + H(+). The catalysed reaction is 1-O-(1Z-hexadecenyl)-2-(9Z-octadecenoyl)-sn-glycero-3-phosphocholine + H2O = 1-(1Z-hexadecenyl)-sn-glycero-3-phosphocholine + (9Z)-octadecenoate + H(+). It carries out the reaction 1-hexadecanoyl-sn-glycero-3-phosphocholine + H2O = sn-glycerol 3-phosphocholine + hexadecanoate + H(+). The enzyme catalyses 1',3'-bis-[1,2-di-(9Z,12Z-octadecadienoyl)-sn-glycero-3-phospho]-glycerol + H2O = 1'-[1,2-di-(9Z,12Z-octadecadienoyl)-sn-glycero-3-phospho]-3'-[1-(9Z,12Z-octadecadienoyl)-sn-glycero-3-phospho]-glycerol + (9Z,12Z)-octadecadienoate + H(+). It catalyses the reaction 1'-[1-acyl-2-(9-hydroxy-(10E,12Z)-octadecadienoyl)-sn-glycero-3-phospho]-3'-[1,2-diacyl-sn-glycero-3-phospho]-glycerol + H2O = 9-hydroxy-(10E,12Z)-octadecadienoate + 1'-[1,2-diacyl-sn-glycero-3-phospho],3'-[1-acyl-sn-glycero-3-phospho]-glycerol + H(+). The protein operates within phospholipid metabolism. With respect to regulation, calcium-independent phospholipase. Inhibited by (E)-6-bromomethylene-3-1-naphthalenyl-2H-tetrahydropyran-2-one (BEL). The activity toward 1-hexadecanoyl-2-(5Z,8Z,11Z,14Z-eicosatetraenoyl)-sn-glycero-3-phosphocholine is stimulated by cardiolipin. Functionally, calcium-independent and membrane-bound phospholipase, that catalyzes the esterolytic cleavage of fatty acids from glycerophospholipids to yield free fatty acids and lysophospholipids, hence regulating membrane physical properties and the release of lipid second messengers and growth factors. Hydrolyzes phosphatidylethanolamine, phosphatidylcholine and probably phosphatidylinositol with a possible preference for the former. Also has a broad substrate specificity in terms of fatty acid moieties, hydrolyzing saturated and mono-unsaturated fatty acids at nearly equal rates from either the sn-1 or sn-2 position in diacyl phosphatidylcholine. However, has a weak activity toward polyunsaturated fatty acids at the sn-2 position, and thereby favors the production of 2-arachidonoyl lysophosphatidylcholine, a key branch point metabolite in eicosanoid signaling. On the other hand, can produce arachidonic acid from the sn-1 position of diacyl phospholipid and from the sn-2 position of arachidonate-containing plasmalogen substrates. Therefore, plays an important role in the mobilization of arachidonic acid in response to cellular stimuli and the generation of lipid second messengers. Can also hydrolyze lysophosphatidylcholine. In the mitochondrial compartment, catalyzes the hydrolysis and release of oxidized aliphatic chains from cardiolipin and integrates mitochondrial bioenergetics and signaling. It is essential for maintaining efficient bioenergetic mitochondrial function through tailoring mitochondrial membrane lipid metabolism and composition. The polypeptide is Calcium-independent phospholipase A2-gamma (Homo sapiens (Human)).